Reading from the N-terminus, the 360-residue chain is Aspartate beta-hydroxylase domain-containing protein 1 (360 aa).

Topologically, residues 1 to 45 (MWKGGNQEAVIEGSGGELGVPGSWGLQDAACHLARASLPIMFPWP) are cytoplasmic. A helical transmembrane segment spans residues 46 to 68 (LPLGSSALTMLLGALTSLFLWYC). Residues 69–360 (YRLGSQDMQA…ALDFVFAPDP (292 aa)) lie on the Lumenal side of the membrane.

Belongs to the aspartyl/asparaginyl beta-hydroxylase family.

The protein localises to the membrane. This Mus musculus (Mouse) protein is Aspartate beta-hydroxylase domain-containing protein 1 (Asphd1).